The primary structure comprises 513 residues: ATP synthase subunit alpha (513 aa).

Position 169-176 (169-176) interacts with ATP; sequence GDRQTGKT.

The protein belongs to the ATPase alpha/beta chains family. In terms of assembly, F-type ATPases have 2 components, CF(1) - the catalytic core - and CF(0) - the membrane proton channel. CF(1) has five subunits: alpha(3), beta(3), gamma(1), delta(1), epsilon(1). CF(0) has three main subunits: a(1), b(2) and c(9-12). The alpha and beta chains form an alternating ring which encloses part of the gamma chain. CF(1) is attached to CF(0) by a central stalk formed by the gamma and epsilon chains, while a peripheral stalk is formed by the delta and b chains.

The protein localises to the cell inner membrane. It catalyses the reaction ATP + H2O + 4 H(+)(in) = ADP + phosphate + 5 H(+)(out). Functionally, produces ATP from ADP in the presence of a proton gradient across the membrane. The alpha chain is a regulatory subunit. The sequence is that of ATP synthase subunit alpha from Salmonella paratyphi C (strain RKS4594).